A 37-amino-acid polypeptide reads, in one-letter code: Potassium channel toxin alpha-KTx 1.11 (37 aa).

3 cysteine pairs are disulfide-bonded: C7-C28, C13-C33, and C17-C35.

The protein belongs to the short scorpion toxin superfamily. Potassium channel inhibitor family. Alpha-KTx 01 subfamily. As to expression, expressed by the venom gland.

It is found in the secreted. Reversibly blocks the high conductance calcium-activated potassium channels composed of only alpha subunits (KCa1.1/KCNMA1). Unreversibly blocks the high conductance calcium-activated potassium channels composed of alpha and beta1 subunits (KCNMA1 and KCNMB1). Unreversibly and weakly blocks the high conductance calcium-activated potassium channels composed of alpha and beta4 (KCNMA1 and KCNMB4). This Centruroides noxius (Mexican scorpion) protein is Potassium channel toxin alpha-KTx 1.11.